We begin with the raw amino-acid sequence, 201 residues long: Superoxide dismutase [Mn] (201 aa).

Mn(2+) is bound by residues H27, H81, D163, and H167.

The protein belongs to the iron/manganese superoxide dismutase family. Homodimer. The cofactor is Mn(2+).

It localises to the secreted. The enzyme catalyses 2 superoxide + 2 H(+) = H2O2 + O2. Its function is as follows. Destroys superoxide anion radicals which are normally produced within the cells and which are toxic to biological systems. The polypeptide is Superoxide dismutase [Mn] (sodA) (Streptococcus pyogenes serotype M1).